A 298-amino-acid chain; its full sequence is GTPase Era (298 aa).

The region spanning 3–170 is the Era-type G domain; it reads KSGFVAILGR…IKLLTDNLEE (168 aa). The interval 11-18 is G1; that stretch reads GRPNVGKS. 11–18 serves as a coordination point for GTP; the sequence is GRPNVGKS. Residues 37 to 41 are G2; the sequence is QTTRN. The tract at residues 58 to 61 is G3; the sequence is DTPG. GTP is bound by residues 58–62 and 120–123; these read DTPGI and NKID. A G4 region spans residues 120–123; the sequence is NKID. The interval 149–151 is G5; the sequence is ISA. Residues 201–279 form the KH type-2 domain; the sequence is TQQEVPHSVA…YLETWVKVKK (79 aa).

It belongs to the TRAFAC class TrmE-Era-EngA-EngB-Septin-like GTPase superfamily. Era GTPase family. In terms of assembly, monomer.

It is found in the cytoplasm. Its subcellular location is the cell membrane. An essential GTPase that binds both GDP and GTP, with rapid nucleotide exchange. Plays a role in 16S rRNA processing and 30S ribosomal subunit biogenesis and possibly also in cell cycle regulation and energy metabolism. The chain is GTPase Era from Streptococcus pyogenes serotype M3 (strain ATCC BAA-595 / MGAS315).